The chain runs to 947 residues: Protein translocase subunit SecA 1 (947 aa).

ATP-binding positions include Gln-83, 101-105, and Asp-490; that span reads GEGKT. Residues 860–947 form a disordered region; the sequence is AKAQEQTGQG…KTSKPTRRRG (88 aa). The segment covering 925–934 has biased composition (basic and acidic residues); the sequence is TRRERREAAR. Basic residues predominate over residues 935-947; that stretch reads KQAKTSKPTRRRG.

The protein belongs to the SecA family. In terms of assembly, monomer and homodimer. Part of the essential Sec protein translocation apparatus which comprises SecA, SecYEG and auxiliary proteins SecDF. Other proteins may also be involved.

It localises to the cell membrane. The protein resides in the cytoplasm. The enzyme catalyses ATP + H2O + cellular proteinSide 1 = ADP + phosphate + cellular proteinSide 2.. Part of the Sec protein translocase complex. Interacts with the SecYEG preprotein conducting channel. Has a central role in coupling the hydrolysis of ATP to the transfer of proteins into and across the cell membrane, serving as an ATP-driven molecular motor driving the stepwise translocation of polypeptide chains across the membrane. The chain is Protein translocase subunit SecA 1 from Mycobacterium sp. (strain JLS).